The following is a 338-amino-acid chain: Anthranilate phosphoribosyltransferase (338 aa).

Residues glycine 78, 81–82 (GD), threonine 86, 88–91 (NIST), 106–114 (KHGNRSVSS), and serine 118 contribute to the 5-phospho-alpha-D-ribose 1-diphosphate site. An anthranilate-binding site is contributed by glycine 78. Serine 90 is a Mg(2+) binding site. Asparagine 109 is a binding site for anthranilate. Residue arginine 164 coordinates anthranilate. Mg(2+) is bound by residues aspartate 223 and glutamate 224.

It belongs to the anthranilate phosphoribosyltransferase family. In terms of assembly, homodimer. Mg(2+) serves as cofactor.

The enzyme catalyses N-(5-phospho-beta-D-ribosyl)anthranilate + diphosphate = 5-phospho-alpha-D-ribose 1-diphosphate + anthranilate. Its pathway is amino-acid biosynthesis; L-tryptophan biosynthesis; L-tryptophan from chorismate: step 2/5. Catalyzes the transfer of the phosphoribosyl group of 5-phosphorylribose-1-pyrophosphate (PRPP) to anthranilate to yield N-(5'-phosphoribosyl)-anthranilate (PRA). The sequence is that of Anthranilate phosphoribosyltransferase from Bacillus velezensis (strain DSM 23117 / BGSC 10A6 / LMG 26770 / FZB42) (Bacillus amyloliquefaciens subsp. plantarum).